The primary structure comprises 557 residues: Glucose-6-phosphate isomerase (557 aa).

Glutamate 361 (proton donor) is an active-site residue. Catalysis depends on residues histidine 392 and lysine 520.

The protein belongs to the GPI family.

The protein localises to the cytoplasm. It carries out the reaction alpha-D-glucose 6-phosphate = beta-D-fructose 6-phosphate. It participates in carbohydrate biosynthesis; gluconeogenesis. Its pathway is carbohydrate degradation; glycolysis; D-glyceraldehyde 3-phosphate and glycerone phosphate from D-glucose: step 2/4. Catalyzes the reversible isomerization of glucose-6-phosphate to fructose-6-phosphate. This chain is Glucose-6-phosphate isomerase, found in Acinetobacter baylyi (strain ATCC 33305 / BD413 / ADP1).